The sequence spans 254 residues: Proteasome activator complex subunit 3 (254 aa).

Residues Lys6 and Lys14 each carry the N6-acetyllysine modification. Lys195 is subject to N6-acetyllysine; by P300/CBP.

In terms of assembly, homoheptamer. Post-translationally, acetylation at the major site Lys-195 is important for oligomerization and ability to degrade its target substrates. Deacetylated by SIRT1.

Implicated in immunoproteasome assembly and required for efficient antigen processing. The PA28 activator complex enhances the generation of class I binding peptides by altering the cleavage pattern of the proteasome. This chain is Proteasome activator complex subunit 3, found in Gallus gallus (Chicken).